The following is a 170-amino-acid chain: Adenine phosphoribosyltransferase (170 aa).

Belongs to the purine/pyrimidine phosphoribosyltransferase family. Homodimer.

It is found in the cytoplasm. The enzyme catalyses AMP + diphosphate = 5-phospho-alpha-D-ribose 1-diphosphate + adenine. Its pathway is purine metabolism; AMP biosynthesis via salvage pathway; AMP from adenine: step 1/1. Catalyzes a salvage reaction resulting in the formation of AMP, that is energically less costly than de novo synthesis. The protein is Adenine phosphoribosyltransferase of Brachyspira hyodysenteriae (strain ATCC 49526 / WA1).